The chain runs to 234 residues: UPF0441 protein plu3956 (234 aa).

2 disordered regions span residues 105–129 and 149–234; these read QAGL…QQSG and SAPS…SVGG. Positions 110–127 are enriched in low complexity; it reads TTTSSTSTNGEAQAQQQQ. The segment covering 150–175 has biased composition (polar residues); sequence APSQPLFSSKSATSPANGQFVDSTGK. Low complexity-rich tracts occupy residues 188–205 and 216–234; these read TVPK…TTIT and QSTM…SVGG.

The protein belongs to the UPF0441 family.

The sequence is that of UPF0441 protein plu3956 from Photorhabdus laumondii subsp. laumondii (strain DSM 15139 / CIP 105565 / TT01) (Photorhabdus luminescens subsp. laumondii).